Consider the following 492-residue polypeptide: Catalase isozyme 2 (492 aa).

Residues 1 to 32 (MDPYKFRPSSSNDTPFWTTNAGDPVSNNNSSM) form a disordered region. Residues 8-32 (PSSSNDTPFWTTNAGDPVSNNNSSM) show a composition bias toward polar residues. Residues His65 and Asn138 contribute to the active site. Position 348 (Tyr348) interacts with heme.

This sequence belongs to the catalase family. As to quaternary structure, homotetramer. Requires heme as cofactor. As to expression, abundant in hypocotyls and roots. Low levels are seen in the endosperms and cotyledons.

The protein resides in the peroxisome. It localises to the glyoxysome. The enzyme catalyses 2 H2O2 = O2 + 2 H2O. In terms of biological role, occurs in almost all aerobically respiring organisms and serves to protect cells from the toxic effects of hydrogen peroxide. This chain is Catalase isozyme 2 (CAT2), found in Ricinus communis (Castor bean).